We begin with the raw amino-acid sequence, 466 residues long: Cysteine--tRNA ligase (466 aa).

C33 provides a ligand contact to Zn(2+). Positions 35–45 (PTVYDFAHIGN) match the 'HIGH' region motif. Positions 221, 246, and 250 each coordinate Zn(2+). Positions 279 to 283 (KMSKS) match the 'KMSKS' region motif. K282 contributes to the ATP binding site.

It belongs to the class-I aminoacyl-tRNA synthetase family. Monomer. Zn(2+) is required as a cofactor.

It is found in the cytoplasm. It catalyses the reaction tRNA(Cys) + L-cysteine + ATP = L-cysteinyl-tRNA(Cys) + AMP + diphosphate. This Sinorhizobium medicae (strain WSM419) (Ensifer medicae) protein is Cysteine--tRNA ligase.